The primary structure comprises 721 residues: Polyribonucleotide nucleotidyltransferase (721 aa).

2 residues coordinate Mg(2+): D495 and D501. Positions 562–621 (PRLLSFRIDPELIGTVIGPGGRTIKGITERTNTKIDIEDGGIVTIASHDGAAAEEAQKII) constitute a KH domain. In terms of domain architecture, S1 motif spans 631-699 (GEIFTGVVTR…SRGRINLTLR (69 aa)). Positions 702 to 721 (SQNSGMSYPEPTPTPVAPLN) are disordered. The span at 711 to 721 (EPTPTPVAPLN) shows a compositional bias: pro residues.

This sequence belongs to the polyribonucleotide nucleotidyltransferase family. The cofactor is Mg(2+).

Its subcellular location is the cytoplasm. The catalysed reaction is RNA(n+1) + phosphate = RNA(n) + a ribonucleoside 5'-diphosphate. Its function is as follows. Involved in mRNA degradation. Catalyzes the phosphorolysis of single-stranded polyribonucleotides processively in the 3'- to 5'-direction. The protein is Polyribonucleotide nucleotidyltransferase of Prochlorococcus marinus (strain MIT 9312).